The sequence spans 100 residues: Protein RADIALIS-like 1 (100 aa).

Residues 9–64 form the SANT domain; sequence QSSGSWTAKQNKAFEQALATYDQDTPNRWQNVAKVVGGKTTEEVKRHYELLVQDIN. Residues 73–100 form a disordered region; sequence FPNYRTSGGCTNGRLSQEEKRMRNMRLQ. The span at 76-87 shows a compositional bias: polar residues; sequence YRTSGGCTNGRL.

It is found in the nucleus. In terms of biological role, probable transcription factor. The protein is Protein RADIALIS-like 1 (RL1) of Arabidopsis thaliana (Mouse-ear cress).